Here is a 159-residue protein sequence, read N- to C-terminus: RNA pyrophosphohydrolase (159 aa).

The 144-residue stretch at glycine 6–lysine 149 folds into the Nudix hydrolase domain. The Nudix box motif lies at glycine 38 to glycine 59.

It belongs to the Nudix hydrolase family. RppH subfamily. The cofactor is a divalent metal cation.

In terms of biological role, accelerates the degradation of transcripts by removing pyrophosphate from the 5'-end of triphosphorylated RNA, leading to a more labile monophosphorylated state that can stimulate subsequent ribonuclease cleavage. This is RNA pyrophosphohydrolase from Pseudomonas entomophila (strain L48).